Consider the following 424-residue polypeptide: MDGIRVYIETFGCTFNQADSEIMAGVLREEGAVLTGIDDADVIIINTCYVKHPTEHKVINRIKKIQETYPEKGLVVAGCMVEIDPSKLEAISGDASWLGPHQLRRAPQAVRAASNGLVERITGFTSDVKVKVPRVRSNPLIHIIPICEGCNGSCSYCCTRFARGRIQSYPSDLIISEAREAVASGCREIQLTAQDTAAYGVDTGEKLSDIIKGISGIPGNFRIRVGMMHPASVLRDLDGLVEAFKSEKVYSFLHLPVQSGSDSVLADMERGHTVDEFRMIVERFRSEIPDISIATDIIVGYPTEEREDFMDTCSLLEEVKPSFIHLSKYRHRPRARSSSLDEIDFRELRRRSRALEELKMRITEEENRRLVGSFQEILVVERGRKGGFIGRTGSYIPVVTETGEPGSFRRVRIRDATGTYLLAD.

The MTTase N-terminal domain occupies 4–115 (IRVYIETFGC…APQAVRAASN (112 aa)). [4Fe-4S] cluster is bound by residues cysteine 13, cysteine 48, cysteine 79, cysteine 150, cysteine 154, and cysteine 157. One can recognise a Radical SAM core domain in the interval 136-365 (RSNPLIHIIP…EELKMRITEE (230 aa)). One can recognise a TRAM domain in the interval 368–424 (RRLVGSFQEILVVERGRKGGFIGRTGSYIPVVTETGEPGSFRRVRIRDATGTYLLAD).

Belongs to the methylthiotransferase family. CDKAL1 subfamily. It depends on [4Fe-4S] cluster as a cofactor.

The catalysed reaction is N(6)-L-threonylcarbamoyladenosine(37) in tRNA + (sulfur carrier)-SH + AH2 + 2 S-adenosyl-L-methionine = 2-methylsulfanyl-N(6)-L-threonylcarbamoyladenosine(37) in tRNA + (sulfur carrier)-H + 5'-deoxyadenosine + L-methionine + A + S-adenosyl-L-homocysteine + 2 H(+). Its function is as follows. Catalyzes the methylthiolation of N6-threonylcarbamoyladenosine (t(6)A), leading to the formation of 2-methylthio-N6-threonylcarbamoyladenosine (ms(2)t(6)A) at position 37 in tRNAs that read codons beginning with adenine. The sequence is that of Probable threonylcarbamoyladenosine tRNA methylthiotransferase from Methanothermobacter thermautotrophicus (strain ATCC 29096 / DSM 1053 / JCM 10044 / NBRC 100330 / Delta H) (Methanobacterium thermoautotrophicum).